A 362-amino-acid chain; its full sequence is MVKLFIGNLPREATEQEIRSLFEQYGKVLECDIIKNYGFVHIEDKTAAEDAIRNLHHYKLHGVNINVEASKNKSKTSTKLHVGNISPTCTNKELRAKFEEYGPVIECDIVKDYAFVHMERAEDAVEAIRGLDNTEFQGKRMHVQLSTSRLRTAPGMGDQSGCYRCGKEGHWSKECPVDRSGRVADFTEQYNEQYGAVRTPYTMGYGDSLYYNNAYGALDAYYKRCRAARSYEAVAAAAASAYNYAEQTLSQLPQVQNTAMASHLTSTSLDPYDRHLLPTSGAAAAAAAAAAAAVTAASSSYYGRDRSPLRRATGPVPTVGEGYGYGHESELSQGSSAARNSLYDMARYEREQYADRARYSAF.

RRM domains lie at 2–72 and 78–148; these read VKLF…ASKN and TKLH…LSTS. Residue K79 forms a Glycyl lysine isopeptide (Lys-Gly) (interchain with G-Cter in SUMO2) linkage. Position 86 is a phosphoserine (S86). A Glycyl lysine isopeptide (Lys-Gly) (interchain with G-Cter in SUMO2) cross-link involves residue K92. The segment at 160 to 177 adopts a CCHC-type zinc-finger fold; it reads SGCYRCGKEGHWSKECPV. The interaction with TNPO3 stretch occupies residues 196–362; that stretch reads AVRTPYTMGY…YADRARYSAF (167 aa). Residues 306-336 form a disordered region; that stretch reads RSPLRRATGPVPTVGEGYGYGHESELSQGSS. S307 is modified (phosphoserine).

As to quaternary structure, interacts with TNPO3; the interaction mediates nuclear import of the protein and is disrupted by nuclear Ran bound to GTP. Interacts with EIF4G1 and WT1. Interacts with EIF4A1; the interaction is modulated under stress-induced conditions. Interacts with AGO1. Interacts with AGO2; the interaction occurs under both cell proliferation and differentiation conditions and in an RNA- and phosphorylation-independent manner. Interacts with DDX5; the interaction occurs in an RNA-independent manner. Interacts with RBPMS; the interaction allows cooperative assembly of RNA-bound stable cell-specific alternative splicing regulatory complexes. Phosphorylated. Phosphorylated in vitro on Ser-307 by SRPK1. Phosphorylation on Ser-307 is induced upon cell stress signaling, which alters its subcellular localization and may modulate its activity on IRES-mediated mRNA translation. Phosphorylation on Ser-307 is induced upon cell muscle differentiation.

The protein resides in the nucleus. The protein localises to the nucleolus. It localises to the nucleus speckle. It is found in the cytoplasm. Its subcellular location is the cytoplasmic granule. Functionally, RNA-binding factor involved in multiple aspects of cellular processes like alternative splicing of pre-mRNA and translation regulation. Modulates alternative 5'-splice site and exon selection. Acts as a muscle cell differentiation-promoting factor. Activates exon skipping of the PTB pre-mRNA during muscle cell differentiation. Antagonizes the activity of the splicing factor PTBP1 to modulate muscle cell-specific exon selection of alpha tropomyosin. Binds to intronic pyrimidine-rich sequence of the TPM1 and MAPT pre-mRNAs. Required for the translational activation of PER1 mRNA in response to circadian clock. Binds directly to the 3'-UTR of the PER1 mRNA. Exerts a suppressive activity on Cap-dependent translation via binding to CU-rich responsive elements within the 3'UTR of mRNAs, a process increased under stress conditions or during myocytes differentiation. Recruits EIF4A1 to stimulate IRES-dependent translation initiation in respons to cellular stress. Associates to internal ribosome entry segment (IRES) in target mRNA species under stress conditions. Plays a role for miRNA-guided RNA cleavage and translation suppression by promoting association of AGO2-containing miRNPs with their cognate target mRNAs. Associates with miRNAs during muscle cell differentiation. Binds preferentially to 5'-CGCGCG[GCA]-3' motif in vitro. This chain is RNA-binding protein 4 (RBM4), found in Bos taurus (Bovine).